Consider the following 638-residue polypeptide: MSASSSGGSPRFPSCGKNGVTSLTQKKVLRAPCGAPSVTVTKSHKRGMKGDTVNVRRSVRVKTKNPPRCLEITPPSSEKLVSVMRLSDLSTEDDDSGHCKMNRYDKKIDSLMNAVGCLKSEVKMQKGERQMAKRFLEERKEELEEVAHELAETEHENTVLRHNIERMKEEKDYTILQKKHLQQEKECLMSKLVEAEMDGAAAAKQVMALKDTIGKLKTEKQMTCTDINTLARQKELLLQKLSTFEETNRTLRDLLREQHCKEDSERLMEQQGALLKRLAEADSEKARLLLLLQDKDKEVEELLQEIQCEKAQAKTASELSKSMESMRGHLQAQLRSKEAENSRLCMQIKNLERSGNQHKAEVEAIMEQLKELKQKGDRDKESLKKAIRAQKERAEKSEEYAEQLHVQLADKDLYVAEALSTLESWRSRYNQVVKDKGDLELEIIVLNDRVTDLVNQQQTLEEKMREDRDSLVERLHRQTAEYSAFKLENERLKASFAPMEDKLNQAHLEVQQLKASVKNYEGMIDNYKSQVMKTRLEADEVAAQLERCDKENKILKDEMNKEIEAARRQFQSQLADLQQLPDILKITEAKLAECQDQLQGYERKNIDLTAIISDLRSRVRDWQKGSHELTRAGARIPR.

Residue T73 is modified to Phosphothreonine. S76 carries the phosphoserine; by TSSK4 modification. 2 positions are modified to phosphoserine: S87 and S90. T91 is modified (phosphothreonine). Phosphoserine is present on residues S96 and S110. K119 participates in a covalent cross-link: Glycyl lysine isopeptide (Lys-Gly) (interchain with G-Cter in SUMO2). Position 120 is a phosphoserine (S120). A coiled-coil region spans residues 125-198 (QKGERQMAKR…MSKLVEAEMD (74 aa)). T212 carries the post-translational modification Phosphothreonine. Coiled-coil stretches lie at residues 226–404 (DINT…AEQL) and 442–616 (EIIV…SDLR). Position 242 is a phosphoserine (S242). The tract at residues 373–396 (KQKGDRDKESLKKAIRAQKERAEK) is disordered. Phosphoserine is present on S613.

Belongs to the ODF2 family. As to quaternary structure, self-associates. Associates with microtubules and forms a fibrillar structure partially linked to the microtubule network. Interacts via its C-terminus with PLK1. Interacts with ODF1. Localized at the distal/subdistal appendages of mother centrioles. Interacts with MARK4; the interaction is required for localization of ODF2 to centrioles. Interacts with TSSK4. Interacts with AKNA. Interacts with QRICH2. Interacts with CFAP58. Interacts with BBOF1. Interacts with CCDC38. Interacts with CCDC42. Tyrosine phosphorylated. Phosphorylated on Ser-76 by TSSK4.

Its subcellular location is the cytoplasm. The protein resides in the cytoskeleton. It localises to the microtubule organizing center. The protein localises to the centrosome. It is found in the cell projection. Its subcellular location is the cilium. The protein resides in the centriole. It localises to the spindle pole. The protein localises to the flagellum. Functionally, seems to be a major component of sperm tail outer dense fibers (ODF). ODFs are filamentous structures located on the outside of the axoneme in the midpiece and principal piece of the mammalian sperm tail and may help to maintain the passive elastic structures and elastic recoil of the sperm tail. May have a modulating influence on sperm motility. Functions as a general scaffold protein that is specifically localized at the distal/subdistal appendages of mother centrioles. Component of the centrosome matrix required for the localization of PLK1 and NIN to the centrosomes. Required for the formation and/or maintenance of normal CETN1 assembly. In Macaca fascicularis (Crab-eating macaque), this protein is Outer dense fiber protein 2 (ODF2).